A 60-amino-acid polypeptide reads, in one-letter code: Cytotoxin SP15c (60 aa).

4 cysteine pairs are disulfide-bonded: cysteine 3/cysteine 21, cysteine 14/cysteine 38, cysteine 42/cysteine 53, and cysteine 54/cysteine 59.

This sequence belongs to the three-finger toxin family. Short-chain subfamily. Type IA cytotoxin sub-subfamily. As to quaternary structure, monomer in solution; Homodimer and oligomer in the presence of negatively charged lipids forming a pore with a size ranging between 20 and 30 Angstroms. Expressed by the venom gland.

It localises to the secreted. The protein resides in the target cell membrane. Functionally, shows cytolytic activity on many different cells by forming pore in lipid membranes. In vivo, increases heart rate or kills the animal by cardiac arrest. In addition, it binds to heparin with high affinity, interacts with Kv channel-interacting protein 1 (KCNIP1) in a calcium-independent manner, and binds to integrin alpha-V/beta-3 (ITGAV/ITGB3) with moderate affinity. The protein is Cytotoxin SP15c of Naja atra (Chinese cobra).